A 664-amino-acid chain; its full sequence is RBBP8 N-terminal-like protein (664 aa).

Basic and acidic residues predominate over residues 125 to 140 (LRGLGDRPKPRAKEGT). Disordered regions lie at residues 125–284 (LRGL…KLSP) and 369–664 (RAGS…WEET). The segment covering 241–255 (GTPPPLPARSSPPSP) has biased composition (pro residues). A compositionally biased stretch (basic and acidic residues) spans 437-454 (ALDKPLDLSEWGRARGQD). Over residues 481–496 (SGPLTRSPQALSNGTK) the composition is skewed to polar residues. Over residues 516–528 (LPGSQLSLSSPGS) the composition is skewed to low complexity. Residues 537-552 (PLPPPHPQPPPHPQPP) show a composition bias toward pro residues. Residues 554–570 (LDGHPEPSKAEVLRPES) are compositionally biased toward basic and acidic residues. Residues 584-597 (GLSSQAEATTSTTG) are compositionally biased toward polar residues. Residues 628–637 (KKPSRGRRKL) show a composition bias toward basic residues. The segment covering 654–664 (PSPNSSPWEET) has biased composition (polar residues).

The sequence is that of RBBP8 N-terminal-like protein (RBBP8NL) from Homo sapiens (Human).